Reading from the N-terminus, the 377-residue chain is DnaJ-related protein SCJ1 (377 aa).

The signal sequence occupies residues 1–21 (MIPKLYIHLILSLLLLPLILA). The 66-residue stretch at 23–88 (DYYAILEIDK…EKKKIYDQFG (66 aa)) folds into the J domain. Residues 156 to 237 (GSSIEFTLNL…CHGKKVTKKN (82 aa)) form a CR-type zinc finger. CXXCXGXG motif repeat units follow at residues 169–176 (CDACHGSG), 185–192 (CPDCQGRG), 211–218 (CGRCGGTG), and 225–232 (CKTCHGKK). Positions 288–290 (RGD) match the Cell attachment site motif. The Prevents secretion from ER motif lies at 374-377 (KDEL).

It is found in the endoplasmic reticulum lumen. In terms of biological role, regulates protein folding in the endoplasmic reticulum lumen. Probably acts as a J-protein for the Hsp70-type chaperone KAR2 by stimulating its ATP-dependent reaction cycle and initiating folding reactions. Also involved in the endoplasmic reticulum-associated degradation (ERAD) process. Cooperates with KAR2 and another J-protein JEM1 to facilitate the export of ERAD substrates to the cytoplasm by maintaining them in a translocation-competent state and preventing their aggregation in the endoplasmic reticulum lumen. The polypeptide is DnaJ-related protein SCJ1 (SCJ1) (Saccharomyces cerevisiae (strain ATCC 204508 / S288c) (Baker's yeast)).